We begin with the raw amino-acid sequence, 137 residues long: Large ribosomal subunit protein uL16 (137 aa).

This sequence belongs to the universal ribosomal protein uL16 family. Part of the 50S ribosomal subunit.

Functionally, binds 23S rRNA and is also seen to make contacts with the A and possibly P site tRNAs. This Nitratidesulfovibrio vulgaris (strain ATCC 29579 / DSM 644 / CCUG 34227 / NCIMB 8303 / VKM B-1760 / Hildenborough) (Desulfovibrio vulgaris) protein is Large ribosomal subunit protein uL16.